Reading from the N-terminus, the 265-residue chain is 5'-nucleotidase SurE (265 aa).

A divalent metal cation is bound by residues aspartate 12, aspartate 13, serine 43, and asparagine 91.

It belongs to the SurE nucleotidase family. It depends on a divalent metal cation as a cofactor.

Its subcellular location is the cytoplasm. The catalysed reaction is a ribonucleoside 5'-phosphate + H2O = a ribonucleoside + phosphate. Its function is as follows. Nucleotidase that shows phosphatase activity on nucleoside 5'-monophosphates. This Haloquadratum walsbyi (strain DSM 16790 / HBSQ001) protein is 5'-nucleotidase SurE.